Here is a 340-residue protein sequence, read N- to C-terminus: Cobalt-precorrin-5B C(1)-methyltransferase (340 aa).

This sequence belongs to the CbiD family.

The enzyme catalyses Co-precorrin-5B + S-adenosyl-L-methionine = Co-precorrin-6A + S-adenosyl-L-homocysteine. It functions in the pathway cofactor biosynthesis; adenosylcobalamin biosynthesis; cob(II)yrinate a,c-diamide from sirohydrochlorin (anaerobic route): step 6/10. Functionally, catalyzes the methylation of C-1 in cobalt-precorrin-5B to form cobalt-precorrin-6A. The chain is Cobalt-precorrin-5B C(1)-methyltransferase from Pyrobaculum aerophilum (strain ATCC 51768 / DSM 7523 / JCM 9630 / CIP 104966 / NBRC 100827 / IM2).